The following is a 130-amino-acid chain: Small ribosomal subunit protein uS8 (130 aa).

It belongs to the universal ribosomal protein uS8 family. In terms of assembly, part of the 30S ribosomal subunit. Contacts proteins S5 and S12.

One of the primary rRNA binding proteins, it binds directly to 16S rRNA central domain where it helps coordinate assembly of the platform of the 30S subunit. This Alcanivorax borkumensis (strain ATCC 700651 / DSM 11573 / NCIMB 13689 / SK2) protein is Small ribosomal subunit protein uS8.